Consider the following 284-residue polypeptide: Putative ABC transporter ATP-binding protein SCO5958 (284 aa).

Residues 15–250 (VALRGAAFAY…DLLRRAGLRL (236 aa)) enclose the ABC transporter domain. Residue 48 to 55 (GRNGSGKT) coordinates ATP.

The protein belongs to the ABC transporter superfamily.

Its subcellular location is the cell membrane. Its function is as follows. Probably part of an ABC transporter complex. Responsible for energy coupling to the transport system. The protein is Putative ABC transporter ATP-binding protein SCO5958 of Streptomyces coelicolor (strain ATCC BAA-471 / A3(2) / M145).